We begin with the raw amino-acid sequence, 490 residues long: Thiamine biosynthesis bifunctional protein ThiED (490 aa).

Residues 1-213 (MASNGHTLRL…PDPALAATEI (213 aa)) form a thiamine-phosphate synthase region. 4-amino-2-methyl-5-(diphosphooxymethyl)pyrimidine contacts are provided by residues 50-54 (QYRNK) and Asn82. Mg(2+) contacts are provided by Asp83 and Asp102. Ser121 lines the 4-amino-2-methyl-5-(diphosphooxymethyl)pyrimidine pocket. 2-[(2R,5Z)-2-carboxy-4-methylthiazol-5(2H)-ylidene]ethyl phosphate is bound at residue 147–149 (SRS). 4-amino-2-methyl-5-(diphosphooxymethyl)pyrimidine is bound at residue Lys150. 2-[(2R,5Z)-2-carboxy-4-methylthiazol-5(2H)-ylidene]ethyl phosphate-binding positions include Gly177 and 197–198 (IS). The interval 229 to 490 (LTVAGSDSGG…ILAAEDVRDR (262 aa)) is hydroxymethylpyrimidine/phosphomethylpyrimidine kinase. A 4-amino-5-hydroxymethyl-2-methylpyrimidine-binding site is contributed by Gln266.

The protein in the N-terminal section; belongs to the thiamine-phosphate synthase family. This sequence in the C-terminal section; belongs to the ThiD family. Mg(2+) serves as cofactor.

The enzyme catalyses 2-[(2R,5Z)-2-carboxy-4-methylthiazol-5(2H)-ylidene]ethyl phosphate + 4-amino-2-methyl-5-(diphosphooxymethyl)pyrimidine + 2 H(+) = thiamine phosphate + CO2 + diphosphate. It carries out the reaction 2-(2-carboxy-4-methylthiazol-5-yl)ethyl phosphate + 4-amino-2-methyl-5-(diphosphooxymethyl)pyrimidine + 2 H(+) = thiamine phosphate + CO2 + diphosphate. It catalyses the reaction 4-methyl-5-(2-phosphooxyethyl)-thiazole + 4-amino-2-methyl-5-(diphosphooxymethyl)pyrimidine + H(+) = thiamine phosphate + diphosphate. The catalysed reaction is 4-amino-5-hydroxymethyl-2-methylpyrimidine + ATP = 4-amino-2-methyl-5-(phosphooxymethyl)pyrimidine + ADP + H(+). The enzyme catalyses 4-amino-2-methyl-5-(phosphooxymethyl)pyrimidine + ATP = 4-amino-2-methyl-5-(diphosphooxymethyl)pyrimidine + ADP. Its pathway is cofactor biosynthesis; thiamine diphosphate biosynthesis; 4-amino-2-methyl-5-diphosphomethylpyrimidine from 5-amino-1-(5-phospho-D-ribosyl)imidazole: step 3/3. The protein operates within cofactor biosynthesis; thiamine diphosphate biosynthesis; thiamine phosphate from 4-amino-2-methyl-5-diphosphomethylpyrimidine and 4-methyl-5-(2-phosphoethyl)-thiazole: step 1/1. Its function is as follows. Condenses 4-methyl-5-(beta-hydroxyethyl)thiazole monophosphate (THZ-P) and 2-methyl-4-amino-5-hydroxymethyl pyrimidine pyrophosphate (HMP-PP) to form thiamine monophosphate (TMP). Functionally, catalyzes the phosphorylation of hydroxymethylpyrimidine phosphate (HMP-P) to HMP-PP, and of HMP to HMP-P. This chain is Thiamine biosynthesis bifunctional protein ThiED (thiDE), found in Geobacter sulfurreducens (strain ATCC 51573 / DSM 12127 / PCA).